Here is a 180-residue protein sequence, read N- to C-terminus: Cytokinin-beta-glucosidase 2 (180 aa).

In terms of biological role, hydrolyzes cytokinin glucosides thus liberating free cytokinins. The sequence is that of Cytokinin-beta-glucosidase 2 (ROLC2) from Panax ginseng (Korean ginseng).